We begin with the raw amino-acid sequence, 392 residues long: Zinc transporter zipt-7.1 (392 aa).

A glycan (N-linked (GlcNAc...) asparagine) is linked at asparagine 63. Helical transmembrane passes span 82-102 and 114-134; these read VFSL…LFFI and ILLA…IIPH. Positions 139–162 are disordered; sequence HSHGAHDHDHAHSHDHAHNDHSHD. Residues 142–162 show a composition bias toward basic and acidic residues; sequence GAHDHDHAHSHDHAHNDHSHD. Residues 170–190 form a helical membrane-spanning segment; the sequence is GIYVIAGILVFMMVEQLVRII. Asparagine 248 carries N-linked (GlcNAc...) asparagine glycosylation. 3 helical membrane passes run 255 to 275, 304 to 324, and 331 to 351; these read IGAS…TVLL, VTAL…NPVL, and GAIM…SVIP. N-linked (GlcNAc...) asparagine glycosylation occurs at asparagine 361. Residues 371 to 391 form a helical membrane-spanning segment; sequence SLVHLIAICMGVGMMYIVSLV.

This sequence belongs to the ZIP transporter (TC 2.A.5) family. KE4/Catsup subfamily.

It is found in the membrane. In terms of biological role, zinc transporter which regulates intracellular zinc levels. Required for spermatogenesis in both hermaphrodites and males where it resides in an inactive form in immature sperm, spermatids, but is likely activated in response to reduced spe-4 and spe-6 function. Upon activation, mediates the release of zinc from internal stores in spermatids into the cytoplasm. The resulting increase in cytoplasmic zinc levels promotes spermatid activation and subsequent differentiation into mature motile sperm that are capable of fertilization. The chain is Zinc transporter zipt-7.1 from Caenorhabditis briggsae.